The primary structure comprises 285 residues: Small ribosomal subunit protein uS2 (285 aa).

Residues 262–285 form a disordered region; the sequence is NDDWNEDDTAPAAPGAASWGGAAF. Over residues 271–285 the composition is skewed to low complexity; it reads APAAPGAASWGGAAF.

Belongs to the universal ribosomal protein uS2 family. Component of the small ribosomal subunit. Mature ribosomes consist of a small (40S) and a large (60S) subunit. The 40S subunit contains about 33 different proteins and 1 molecule of RNA (18S). The 60S subunit contains about 49 different proteins and 3 molecules of RNA (28S, 5.8S and 5S). Interacts with ribosomal protein S21.

It localises to the cytoplasm. Its function is as follows. Required for the assembly and/or stability of the 40S ribosomal subunit. Required for the processing of the 20S rRNA-precursor to mature 18S rRNA in a late step of the maturation of 40S ribosomal subunits. This Anopheles gambiae (African malaria mosquito) protein is Small ribosomal subunit protein uS2.